The sequence spans 652 residues: DNA ligase (652 aa).

NAD(+) contacts are provided by residues 29-33 (DSEYD), 78-79 (SL), and Glu107. The N6-AMP-lysine intermediate role is filled by Lys109. NAD(+) contacts are provided by Arg130, Glu164, Lys278, and Lys302. Residues Cys395, Cys398, Cys413, and Cys418 each coordinate Zn(2+). The BRCT domain maps to 577-652 (VADAALSGLT…VRDEAWLESL (76 aa)).

The protein belongs to the NAD-dependent DNA ligase family. LigA subfamily. It depends on Mg(2+) as a cofactor. Mn(2+) serves as cofactor.

The catalysed reaction is NAD(+) + (deoxyribonucleotide)n-3'-hydroxyl + 5'-phospho-(deoxyribonucleotide)m = (deoxyribonucleotide)n+m + AMP + beta-nicotinamide D-nucleotide.. DNA ligase that catalyzes the formation of phosphodiester linkages between 5'-phosphoryl and 3'-hydroxyl groups in double-stranded DNA using NAD as a coenzyme and as the energy source for the reaction. It is essential for DNA replication and repair of damaged DNA. This Streptococcus pneumoniae (strain CGSP14) protein is DNA ligase.